The sequence spans 211 residues: Thymidylate kinase (211 aa).

Residue 11-18 participates in ATP binding; it reads GPDGAGKT.

Belongs to the thymidylate kinase family.

The catalysed reaction is dTMP + ATP = dTDP + ADP. Its function is as follows. Phosphorylation of dTMP to form dTDP in both de novo and salvage pathways of dTTP synthesis. The chain is Thymidylate kinase from Streptococcus pyogenes serotype M3 (strain ATCC BAA-595 / MGAS315).